Reading from the N-terminus, the 78-residue chain is MLVLSRKANESIKIDSNIEISILEIKKDSVKIAIKAPENIKILRSEIYDIIKEENKKSILQDKNNIHKIKKLFDYFSK.

It belongs to the CsrA/RsmA family. Homodimer; the beta-strands of each monomer intercalate to form a hydrophobic core, while the alpha-helices form wings that extend away from the core.

The protein resides in the cytoplasm. Functionally, a translational regulator that binds mRNA to regulate translation initiation and/or mRNA stability. Usually binds in the 5'-UTR at or near the Shine-Dalgarno sequence preventing ribosome-binding, thus repressing translation. Its main target seems to be the major flagellin gene, while its function is anatagonized by FliW. The sequence is that of Translational regulator CsrA from Borrelia recurrentis (strain A1).